The primary structure comprises 727 residues: Glucans biosynthesis glucosyltransferase H (727 aa).

Residues 18 to 38 are disordered; that stretch reads SAMPNERPGAMEPQNLSKMPE. A run of 7 helical transmembrane segments spans residues 58 to 78, 97 to 117, 278 to 298, 408 to 428, 460 to 480, 496 to 516, and 572 to 592; these read FLVV…MGAV, VNFC…LILL, LQQF…GWWV, IMAY…LMLA, LFYI…LLLL, IFSV…MMFI, and LLAW…ISAW.

Belongs to the glycosyltransferase 2 family. OpgH subfamily.

Its subcellular location is the cell inner membrane. It functions in the pathway glycan metabolism; osmoregulated periplasmic glucan (OPG) biosynthesis. Functionally, involved in the biosynthesis of osmoregulated periplasmic glucans (OPGs). The polypeptide is Glucans biosynthesis glucosyltransferase H (Shewanella baltica (strain OS223)).